Reading from the N-terminus, the 325-residue chain is Glutarate 2-hydroxylase (325 aa).

3 residues coordinate Fe cation: histidine 160, aspartate 162, and histidine 292.

The protein belongs to the glutarate hydroxylase family. Homotetramer. The cofactor is Fe(2+).

The enzyme catalyses glutarate + 2-oxoglutarate + O2 = (S)-2-hydroxyglutarate + succinate + CO2. The protein operates within amino-acid degradation. Acts as an alpha-ketoglutarate-dependent dioxygenase catalyzing hydroxylation of glutarate (GA) to L-2-hydroxyglutarate (L2HG). Functions in a L-lysine degradation pathway that proceeds via cadaverine, glutarate and L-2-hydroxyglutarate. The protein is Glutarate 2-hydroxylase of Pseudomonas putida (strain GB-1).